A 1741-amino-acid chain; its full sequence is S-layer protein (1741 aa).

The span at 894-904 shows a compositional bias: polar residues; it reads SFTSDSANGSG. The interval 894-913 is disordered; that stretch reads SFTSDSANGSGHSVEGGTGD.

Post-translationally, glycosylated.

It is found in the secreted. It localises to the cell wall. The protein resides in the S-layer. S-layer protein. The S-layer is a paracrystalline mono-layered assembly of proteins which coats the surface of bacteria. Under laboratory conditions, has a supportive but not a critical role in the function of the cyanobacterium. Shows no apparent hemolytic activity against sheep erythrocytes, however, a slight hemolytic activity is detected during the conformational change caused by the rebinding of Ca(2+). This Synechocystis sp. (strain ATCC 27184 / PCC 6803 / Kazusa) protein is S-layer protein.